The following is a 142-amino-acid chain: Hemoglobin subunit alpha-5 (142 aa).

The Globin domain maps to 2-142 (TFSSAEKAAI…VSAVLVSKYR (141 aa)). Position 59 (His59) interacts with O2. His88 is a heme b binding site.

Belongs to the globin family. As to quaternary structure, heterotetramer of two alpha chains and two beta chains. As to expression, red blood cells.

In terms of biological role, this is a larval (tadpole) alpha-globin. This is Hemoglobin subunit alpha-5 (hba5) from Xenopus laevis (African clawed frog).